The sequence spans 123 residues: Large ribosomal subunit protein uL14 (123 aa).

This sequence belongs to the universal ribosomal protein uL14 family. Part of the 50S ribosomal subunit. Forms a cluster with proteins L3 and L19. In the 70S ribosome, L14 and L19 interact and together make contacts with the 16S rRNA in bridges B5 and B8.

Its function is as follows. Binds to 23S rRNA. Forms part of two intersubunit bridges in the 70S ribosome. The polypeptide is Large ribosomal subunit protein uL14 (Aliivibrio fischeri (strain ATCC 700601 / ES114) (Vibrio fischeri)).